We begin with the raw amino-acid sequence, 386 residues long: Methionine aminopeptidase 1 (386 aa).

The C6H2-type zinc-finger motif lies at 6–59 (TRECETEGCHSEAKLQCPTCIKLGIQGSYFCSQECFKGSWATHKLLHKKAKEDK). Zn(2+) is bound by residues Cys-9, Cys-14, Cys-22, Cys-25, Cys-36, Cys-40, His-48, and His-52. Residue His-202 participates in a protein binding. Residues Asp-219, Asp-230, and His-293 each coordinate Zn(2+). His-300 contacts a protein. The Zn(2+) site is built by Glu-326 and Glu-357.

It belongs to the peptidase M24A family. Methionine aminopeptidase type 1 subfamily. Associates with the 60S ribosomal subunit of the 80S translational complex. Zn(2+) is required as a cofactor. The cofactor is Co(2+). It depends on Mn(2+) as a cofactor. Requires Fe(2+) as cofactor.

Its subcellular location is the cytoplasm. It catalyses the reaction Release of N-terminal amino acids, preferentially methionine, from peptides and arylamides.. In terms of biological role, cotranslationally removes the N-terminal methionine from nascent proteins. The N-terminal methionine is often cleaved when the second residue in the primary sequence is small and uncharged (Met-Ala-, Cys, Gly, Pro, Ser, Thr, or Val). This is Methionine aminopeptidase 1 (metap1) from Danio rerio (Zebrafish).